The sequence spans 486 residues: Protein nucleotidyltransferase YdiU (486 aa).

8 residues coordinate ATP: G90, G92, R93, K113, D125, G126, R176, and R183. D252 serves as the catalytic Proton acceptor. The Mg(2+) site is built by N253 and D262. D262 contacts ATP.

This sequence belongs to the SELO family. Mg(2+) serves as cofactor. It depends on Mn(2+) as a cofactor.

It catalyses the reaction L-seryl-[protein] + ATP = 3-O-(5'-adenylyl)-L-seryl-[protein] + diphosphate. The enzyme catalyses L-threonyl-[protein] + ATP = 3-O-(5'-adenylyl)-L-threonyl-[protein] + diphosphate. It carries out the reaction L-tyrosyl-[protein] + ATP = O-(5'-adenylyl)-L-tyrosyl-[protein] + diphosphate. The catalysed reaction is L-histidyl-[protein] + UTP = N(tele)-(5'-uridylyl)-L-histidyl-[protein] + diphosphate. It catalyses the reaction L-seryl-[protein] + UTP = O-(5'-uridylyl)-L-seryl-[protein] + diphosphate. The enzyme catalyses L-tyrosyl-[protein] + UTP = O-(5'-uridylyl)-L-tyrosyl-[protein] + diphosphate. Its function is as follows. Nucleotidyltransferase involved in the post-translational modification of proteins. It can catalyze the addition of adenosine monophosphate (AMP) or uridine monophosphate (UMP) to a protein, resulting in modifications known as AMPylation and UMPylation. This is Protein nucleotidyltransferase YdiU from Pseudomonas putida (strain ATCC 47054 / DSM 6125 / CFBP 8728 / NCIMB 11950 / KT2440).